A 121-amino-acid polypeptide reads, in one-letter code: Large ribosomal subunit protein uL18 (121 aa).

It belongs to the universal ribosomal protein uL18 family. Part of the 50S ribosomal subunit; part of the 5S rRNA/L5/L18/L25 subcomplex. Contacts the 5S and 23S rRNAs.

Functionally, this is one of the proteins that bind and probably mediate the attachment of the 5S RNA into the large ribosomal subunit, where it forms part of the central protuberance. The sequence is that of Large ribosomal subunit protein uL18 from Moorella thermoacetica (strain ATCC 39073 / JCM 9320).